Consider the following 273-residue polypeptide: Thiazole synthase (273 aa).

The active-site Schiff-base intermediate with DXP is the Lys-113. Residues Gly-174, 201 to 202 (AG), and 223 to 224 (NT) each bind 1-deoxy-D-xylulose 5-phosphate.

This sequence belongs to the ThiG family. As to quaternary structure, homotetramer. Forms heterodimers with either ThiH or ThiS.

The protein localises to the cytoplasm. The enzyme catalyses [ThiS sulfur-carrier protein]-C-terminal-Gly-aminoethanethioate + 2-iminoacetate + 1-deoxy-D-xylulose 5-phosphate = [ThiS sulfur-carrier protein]-C-terminal Gly-Gly + 2-[(2R,5Z)-2-carboxy-4-methylthiazol-5(2H)-ylidene]ethyl phosphate + 2 H2O + H(+). Its pathway is cofactor biosynthesis; thiamine diphosphate biosynthesis. Catalyzes the rearrangement of 1-deoxy-D-xylulose 5-phosphate (DXP) to produce the thiazole phosphate moiety of thiamine. Sulfur is provided by the thiocarboxylate moiety of the carrier protein ThiS. In vitro, sulfur can be provided by H(2)S. The sequence is that of Thiazole synthase from Salinibacter ruber (strain DSM 13855 / M31).